The chain runs to 309 residues: Probable manganese-dependent inorganic pyrophosphatase (309 aa).

Mn(2+) contacts are provided by His9, Asp13, Asp15, Asp75, His97, and Asp149.

It belongs to the PPase class C family. Mn(2+) is required as a cofactor.

The protein resides in the cytoplasm. It carries out the reaction diphosphate + H2O = 2 phosphate + H(+). This is Probable manganese-dependent inorganic pyrophosphatase from Bacillus licheniformis (strain ATCC 14580 / DSM 13 / JCM 2505 / CCUG 7422 / NBRC 12200 / NCIMB 9375 / NCTC 10341 / NRRL NRS-1264 / Gibson 46).